Here is a 587-residue protein sequence, read N- to C-terminus: Solute carrier family 13 member 2 (587 aa).

Transmembrane regions (helical) follow at residues 13-33 (FYLIVLCLPIFLLPLPLIVQT), 53-73 (ALPLAVTALFPIVLFPLMGIM), 86-106 (TNILFVGGLMVAIAVEHWNLH), and 136-156 (SMWISNTATTAMMVPIGHAVL). The segment at 188 to 208 (KLDNGQPVSAPSEPRTQKTQE) is disordered. The next 8 helical transmembrane spans lie at 264–284 (FAFPTMIILLLLAWLWLQVLF), 329–349 (VLFVLLVVLWFTREPGFFPGW), 367–387 (TVAIFISLVMFIIPSKIPGLM), 407–427 (TVNDKMPWNIVILLGGGFALA), 445–465 (PLQHIPPSATAVILCLLIAIF), 477–497 (LFLPILASMAQAICLHPLYVM), 506–526 (LAFMLPVATPPNAIVFSFGGL), and 535–555 (GFLLNIIGVLAITLSINSWSI).

The protein belongs to the SLC13A/DASS transporter (TC 2.A.47) family. NADC subfamily. In terms of tissue distribution, expressed in large and small intestine and in the kidney proximal tubules.

It is found in the apical cell membrane. It catalyses the reaction succinate(out) + 3 Na(+)(out) = succinate(in) + 3 Na(+)(in). The catalysed reaction is fumarate(out) + 3 Na(+)(out) = fumarate(in) + 3 Na(+)(in). It carries out the reaction 2-oxoglutarate(out) + 3 Na(+)(out) = 2-oxoglutarate(in) + 3 Na(+)(in). With respect to regulation, li(+) decreases succinate transport in the presence of Na(+), by competing at one of the three cation binding sites. Its function is as follows. Low-affinity sodium-dicarboxylate cotransporter, that mediates the entry of citric acid cycle intermediates, such as succinate, citrate, fumarate and alpha-ketoglutarate (2-oxoglutarate) into the small intestine and renal proximal tubule. Transports the dicarboxylate into the cell with a probable stoichiometry of 3 Na(+) for 1 divalent dicarboxylate, rendering the process electrogenic. Citrate is transported in protonated form as a divalent anion, rather than the trivalent form which is normally found in blood. Has a critical role in renal dicarboxylate transport. In Rattus norvegicus (Rat), this protein is Solute carrier family 13 member 2 (Slc13a2).